The primary structure comprises 398 residues: Phosphoglycerate kinase (398 aa).

Residues aspartate 21 to asparagine 23, arginine 36, histidine 59 to arginine 62, arginine 119, and arginine 157 contribute to the substrate site. Residues lysine 208, glycine 296, glutamate 327, and glycine 354–serine 357 contribute to the ATP site.

It belongs to the phosphoglycerate kinase family. Monomer.

It localises to the cytoplasm. It catalyses the reaction (2R)-3-phosphoglycerate + ATP = (2R)-3-phospho-glyceroyl phosphate + ADP. The protein operates within carbohydrate degradation; glycolysis; pyruvate from D-glyceraldehyde 3-phosphate: step 2/5. This chain is Phosphoglycerate kinase, found in Streptococcus equi subsp. zooepidemicus (strain MGCS10565).